A 102-amino-acid polypeptide reads, in one-letter code: UPF0328 protein ECU10_1820 (102 aa).

The protein belongs to the UPF0328 family.

The polypeptide is UPF0328 protein ECU10_1820 (Encephalitozoon cuniculi (strain GB-M1) (Microsporidian parasite)).